We begin with the raw amino-acid sequence, 317 residues long: Adenine deaminase (317 aa).

Zn(2+) contacts are provided by His14, His16, and His194. Glu197 functions as the Proton donor in the catalytic mechanism. Asp275 lines the Zn(2+) pocket. Residue Asp276 coordinates substrate.

Belongs to the metallo-dependent hydrolases superfamily. Adenosine and AMP deaminases family. Adenine deaminase type 2 subfamily. Zn(2+) is required as a cofactor.

It carries out the reaction adenine + H2O + H(+) = hypoxanthine + NH4(+). Functionally, catalyzes the hydrolytic deamination of adenine to hypoxanthine. Plays an important role in the purine salvage pathway and in nitrogen catabolism. This Pseudomonas fluorescens (strain Pf0-1) protein is Adenine deaminase.